Here is a 169-residue protein sequence, read N- to C-terminus: Biogenesis of lysosome-related organelles complex 1 subunit 4 (169 aa).

Belongs to the BLOC1S4 family. As to quaternary structure, component of the biogenesis of lysosome-related organelles complex-1 (BLOC-1) composed of Blos1, Blos2, Blos3, Blos4, Dysb, Muted, Pldn and Snapin. Interacts with Pldn.

Its function is as follows. Component of the biogenesis of lysosome-related organelles complex-1 (BLOC-1) involved in pigment granule biogenesis. The chain is Biogenesis of lysosome-related organelles complex 1 subunit 4 from Drosophila melanogaster (Fruit fly).